Here is a 320-residue protein sequence, read N- to C-terminus: Tyrosine recombinase XerC (320 aa).

The 91-residue stretch at 14 to 104 (ADVREAVASW…SLRSFARHLE (91 aa)) folds into the Core-binding (CB) domain. Residues 125 to 311 (RLPRPLPVAA…DSARLMSAFE (187 aa)) form the Tyr recombinase domain. Residues R170, K195, H263, R266, and H289 contribute to the active site. The O-(3'-phospho-DNA)-tyrosine intermediate role is filled by Y298.

The protein belongs to the 'phage' integrase family. XerC subfamily. Forms a cyclic heterotetrameric complex composed of two molecules of XerC and two molecules of XerD.

Its subcellular location is the cytoplasm. Site-specific tyrosine recombinase, which acts by catalyzing the cutting and rejoining of the recombining DNA molecules. The XerC-XerD complex is essential to convert dimers of the bacterial chromosome into monomers to permit their segregation at cell division. It also contributes to the segregational stability of plasmids. In Methylobacterium sp. (strain 4-46), this protein is Tyrosine recombinase XerC.